We begin with the raw amino-acid sequence, 503 residues long: Maturase K (503 aa).

The protein belongs to the intron maturase 2 family. MatK subfamily.

Its subcellular location is the plastid. It is found in the chloroplast. In terms of biological role, usually encoded in the trnK tRNA gene intron. Probably assists in splicing its own and other chloroplast group II introns. In Rosa carolina (Pasture rose), this protein is Maturase K.